A 173-amino-acid polypeptide reads, in one-letter code: 2-C-methyl-D-erythritol 2,4-cyclodiphosphate synthase (173 aa).

2 residues coordinate a divalent metal cation: Asp-17 and His-19. Residues 17 to 19 (DVH) and 49 to 50 (HS) contribute to the 4-CDP-2-C-methyl-D-erythritol 2-phosphate site. Residue His-57 coordinates a divalent metal cation. Residues 76–80 (FPNTD), 147–150 (TTTE), Phe-154, and Arg-157 each bind 4-CDP-2-C-methyl-D-erythritol 2-phosphate.

The protein belongs to the IspF family. In terms of assembly, homotrimer. The cofactor is a divalent metal cation.

The catalysed reaction is 4-CDP-2-C-methyl-D-erythritol 2-phosphate = 2-C-methyl-D-erythritol 2,4-cyclic diphosphate + CMP. Its pathway is isoprenoid biosynthesis; isopentenyl diphosphate biosynthesis via DXP pathway; isopentenyl diphosphate from 1-deoxy-D-xylulose 5-phosphate: step 4/6. In terms of biological role, involved in the biosynthesis of isopentenyl diphosphate (IPP) and dimethylallyl diphosphate (DMAPP), two major building blocks of isoprenoid compounds. Catalyzes the conversion of 4-diphosphocytidyl-2-C-methyl-D-erythritol 2-phosphate (CDP-ME2P) to 2-C-methyl-D-erythritol 2,4-cyclodiphosphate (ME-CPP) with a corresponding release of cytidine 5-monophosphate (CMP). In Ehrlichia canis (strain Jake), this protein is 2-C-methyl-D-erythritol 2,4-cyclodiphosphate synthase.